The following is a 211-amino-acid chain: uncharacterized protein (211 aa).

The tract at residues 155 to 211 (AAENASEEGDKKQIITDSGKLPETEELTETTNEDLDIKQFSPYSSESSANVSSYNKS) is disordered. Residues 178–188 (TEELTETTNED) show a composition bias toward acidic residues. Residues 195–211 (SPYSSESSANVSSYNKS) show a composition bias toward low complexity.

This is an uncharacterized protein from Schizosaccharomyces pombe (strain 972 / ATCC 24843) (Fission yeast).